Consider the following 154-residue polypeptide: Deoxyuridine 5'-triphosphate nucleotidohydrolase (154 aa).

Substrate-binding positions include 72–74 (RSG), Asn85, 89–91 (LID), and Met99.

This sequence belongs to the dUTPase family. The cofactor is Mg(2+).

It catalyses the reaction dUTP + H2O = dUMP + diphosphate + H(+). It functions in the pathway pyrimidine metabolism; dUMP biosynthesis; dUMP from dCTP (dUTP route): step 2/2. In terms of biological role, this enzyme is involved in nucleotide metabolism: it produces dUMP, the immediate precursor of thymidine nucleotides and it decreases the intracellular concentration of dUTP so that uracil cannot be incorporated into DNA. The chain is Deoxyuridine 5'-triphosphate nucleotidohydrolase from Psychrobacter sp. (strain PRwf-1).